We begin with the raw amino-acid sequence, 374 residues long: Tryptophan--tRNA ligase (374 aa).

The 'HIGH' region motif lies at 71–79; sequence PSGRMHLGH. The short motif at 247–251 is the 'KMSKS' region element; the sequence is KMSSS.

It belongs to the class-I aminoacyl-tRNA synthetase family.

The protein resides in the cytoplasm. The catalysed reaction is tRNA(Trp) + L-tryptophan + ATP = L-tryptophyl-tRNA(Trp) + AMP + diphosphate + H(+). The chain is Tryptophan--tRNA ligase from Methanopyrus kandleri (strain AV19 / DSM 6324 / JCM 9639 / NBRC 100938).